We begin with the raw amino-acid sequence, 466 residues long: Dihydrolipoyl dehydrogenase 3 (466 aa).

FAD is bound by residues Glu-33–Cys-42, Lys-51, and Gly-115. Cys-42 and Cys-47 are oxidised to a cystine. Residues Gly-181 to Ile-185, Glu-204, Val-238, and Ala-271 to Arg-274 each bind NAD(+). Residues Asp-313 and Ala-321 each coordinate FAD. The active-site Proton acceptor is the His-445.

It belongs to the class-I pyridine nucleotide-disulfide oxidoreductase family. In terms of assembly, homodimer. It depends on FAD as a cofactor.

It localises to the cytoplasm. The enzyme catalyses N(6)-[(R)-dihydrolipoyl]-L-lysyl-[protein] + NAD(+) = N(6)-[(R)-lipoyl]-L-lysyl-[protein] + NADH + H(+). Functionally, LPD-3 may substitute for lipoamide dehydrogenase of the 2-oxoglutarate dehydrogenase and pyruvate multienzyme complexes when the latter is inactive or missing. The chain is Dihydrolipoyl dehydrogenase 3 (lpd3) from Pseudomonas putida (Arthrobacter siderocapsulatus).